The following is an 832-amino-acid chain: Mucosa-associated lymphoid tissue lymphoma translocation protein 1 homolog (832 aa).

Residues 1–39 (MSLWGQPLQASPPLAVRQPPTASSGPSTSPPAGATLNRL) are disordered. At S2 the chain carries N-acetylserine. Low complexity predominate over residues 19-39 (PPTASSGPSTSPPAGATLNRL). Positions 45 to 132 (RRLSESLDRA…EVLPLLNPPG (88 aa)) constitute a Death domain. Ig-like C2-type domains lie at 131–207 (PGLK…FEFS) and 218–314 (AEVT…KKAE). S141 carries the post-translational modification Phosphoserine. Intrachain disulfides connect C154-C196 and C257-C299. The tract at residues 356–570 (IGNMSYWEHP…SLSEKRALTD (215 aa)) is caspase-like. A Nuclear export signal motif is present at residues 377 to 384 (LTNLLRQL). Catalysis depends on residues H423 and C472.

This sequence belongs to the peptidase C14B family. As to quaternary structure, homooligomer; forms oligomers which bind to TRAF6. Forms a complex with CARD14 and MALT1; resulting in the formation of a CBM (CARD14-BCL10-MALT1) complex. Forms a complex with CARD11 and MALT1; resulting in the formation of a CBM (CARD11-BCL10-MALT1) complex. Forms a complex with CARD9 and MALT1; resulting in the formation of a CBM (CARD9-BCL10-MALT1) complex.

The protein localises to the cytoplasm. It localises to the perinuclear region. Its subcellular location is the nucleus. Its function is as follows. Protease that enhances BCL10-induced activation: acts via formation of CBM complexes that channel adaptive and innate immune signaling downstream of CARD domain-containing proteins (CARD9, CARD11 and CARD14) to activate NF-kappa-B and MAP kinase p38 pathways which stimulate expression of genes encoding pro-inflammatory cytokines and chemokines. Mediates BCL10 cleavage: MALT1-dependent BCL10 cleavage plays an important role in T-cell antigen receptor-induced integrin adhesion. Involved in the induction of T helper 17 cells (Th17) differentiation. Cleaves RC3H1 and ZC3H12A in response to T-cell receptor (TCR) stimulation which releases their cooperatively repressed targets to promote Th17 cell differentiation. Also mediates cleavage of N4BP1 in T-cells following TCR-mediated activation, leading to N4BP1 inactivation. May also have ubiquitin ligase activity: binds to TRAF6, inducing TRAF6 oligomerization and activation of its ligase activity. In Mus musculus (Mouse), this protein is Mucosa-associated lymphoid tissue lymphoma translocation protein 1 homolog.